A 461-amino-acid chain; its full sequence is Argininosuccinate lyase (461 aa).

Belongs to the lyase 1 family. Argininosuccinate lyase subfamily.

It localises to the cytoplasm. The catalysed reaction is 2-(N(omega)-L-arginino)succinate = fumarate + L-arginine. The protein operates within amino-acid biosynthesis; L-arginine biosynthesis; L-arginine from L-ornithine and carbamoyl phosphate: step 3/3. The sequence is that of Argininosuccinate lyase from Aeromonas hydrophila subsp. hydrophila (strain ATCC 7966 / DSM 30187 / BCRC 13018 / CCUG 14551 / JCM 1027 / KCTC 2358 / NCIMB 9240 / NCTC 8049).